The sequence spans 393 residues: MSEQTQTCASEIQATNVAVQHPKSEKINLMNLTRKEMRELFAEMGEKPFRADQLMKWIYHFGEDNFDNMSNINKVLREKLKQIAEIKAPEVSVEQRSSDGTIKWAMQVGDQQIETVYIPEDDRATLCVSSQVGCALACKFCSTAQQGFNRNLTVSEIIGQVWRASKIIGNFGITGVRPITNVVMMGMGEPLLNLNNVIPAMEIMLDDFAYGLSKRRVTLSTAGVVPALDIMREKIDVALAISLHAPNDELRDEIMPINKKYNIKMLMDSVHKYLEVSNANHGKVTIEYVLLDHVNDGTEHAHQLAEVLKNTPCKINLIPWNPFPEAPYGKSSNSRVDRFQKTLMEYGFTVIVRKTRGDDIDAACGQLAGDVIDRTKRTMEKRKFGKGIAVQNH.

Glutamate 114 (proton acceptor) is an active-site residue. The 240-residue stretch at 120–359 (EDDRATLCVS…VIVRKTRGDD (240 aa)) folds into the Radical SAM core domain. Cysteine 127 and cysteine 364 are disulfide-bonded. Positions 134, 138, and 141 each coordinate [4Fe-4S] cluster. S-adenosyl-L-methionine-binding positions include 188–189 (GE), serine 220, 242–244 (SLH), and asparagine 321. Cysteine 364 acts as the S-methylcysteine intermediate in catalysis.

It belongs to the radical SAM superfamily. RlmN family. [4Fe-4S] cluster is required as a cofactor.

The protein localises to the cytoplasm. The catalysed reaction is adenosine(2503) in 23S rRNA + 2 reduced [2Fe-2S]-[ferredoxin] + 2 S-adenosyl-L-methionine = 2-methyladenosine(2503) in 23S rRNA + 5'-deoxyadenosine + L-methionine + 2 oxidized [2Fe-2S]-[ferredoxin] + S-adenosyl-L-homocysteine. It catalyses the reaction adenosine(37) in tRNA + 2 reduced [2Fe-2S]-[ferredoxin] + 2 S-adenosyl-L-methionine = 2-methyladenosine(37) in tRNA + 5'-deoxyadenosine + L-methionine + 2 oxidized [2Fe-2S]-[ferredoxin] + S-adenosyl-L-homocysteine. In terms of biological role, specifically methylates position 2 of adenine 2503 in 23S rRNA and position 2 of adenine 37 in tRNAs. m2A2503 modification seems to play a crucial role in the proofreading step occurring at the peptidyl transferase center and thus would serve to optimize ribosomal fidelity. This Actinobacillus pleuropneumoniae serotype 5b (strain L20) protein is Dual-specificity RNA methyltransferase RlmN.